The primary structure comprises 180 residues: MKLLLLLCLELTLVYVHAEEASSEGQNLNVEKINGKWFSILLASDKREKIEEHGTMRVFVEHIDVLENSLAFKFHTVIDEECTEIYLVADKTEKAGEYSVTYDGFNTFTILKTDYDNYIMFHLINKKDEENFQLMELFGREPDLSSDIKEKFAKLCEEHGIVRENIIDLSNANRCLQARE.

Positions 1–18 are cleaved as a signal peptide; the sequence is MKLLLLLCLELTLVYVHA. Cysteines 82 and 175 form a disulfide.

It belongs to the calycin superfamily. Lipocalin family.

The protein resides in the secreted. In terms of biological role, major urinary proteins (Mups) bind pheromones, and thus stabilize them to allow slow release into the air from urine marks. May protect pheromones from oxidation. May also act as pheromones themselves. In this context, they play a role in the regulation of social behaviors, such as aggression, mating, pup-suckling, territory establishment and dominance. In Mus musculus (Mouse), this protein is Major urinary protein 5.